We begin with the raw amino-acid sequence, 295 residues long: 2-dehydropantoate 2-reductase (295 aa).

Residues 9 to 14, Asn100, and Ala126 each bind NADP(+); that span reads GPGAVG. Residue Asn100 coordinates substrate. Residue Lys177 is the Proton donor of the active site. Residues Asn181 and Ser246 each contribute to the substrate site. NADP(+) is bound at residue Glu258.

Belongs to the ketopantoate reductase family.

It localises to the cytoplasm. The catalysed reaction is (R)-pantoate + NADP(+) = 2-dehydropantoate + NADPH + H(+). Its pathway is cofactor biosynthesis; (R)-pantothenate biosynthesis; (R)-pantoate from 3-methyl-2-oxobutanoate: step 2/2. Its function is as follows. Catalyzes the NADPH-dependent reduction of ketopantoate into pantoic acid. This chain is 2-dehydropantoate 2-reductase, found in Mycobacterium tuberculosis (strain CDC 1551 / Oshkosh).